Consider the following 651-residue polypeptide: Histone-arginine methyltransferase CARM1 (651 aa).

The interval 28-139 (ATVSVFPGAR…GHTLERSVFS (112 aa)) is interaction with C9orf72. Residues 147 to 454 (AVQYFQFYGY…KRQSYDISIV (308 aa)) enclose the SAM-dependent MTase PRMT-type domain. Q160, R169, G193, and E215 together coordinate S-adenosyl-L-methionine. S217 is modified (phosphoserine). K228 participates in a covalent cross-link: Glycyl lysine isopeptide (Lys-Gly) (interchain with G-Cter in ubiquitin). S-adenosyl-L-methionine is bound by residues E244 and S272. The segment at 347-380 (RILMAKSVKYTVNFLEAKEGDLHRIEIPFKFHML) is required for nuclear translocation. The segment at 500–651 (TGSTYNLSSG…IPTNTMHYGS (152 aa)) is transactivation domain. R551 is subject to Dimethylated arginine. The segment at 581 to 617 (RSSYQWGPGRLRGHAGSSVPMTCPTGSSGAQGGGGSS) is disordered.

This sequence belongs to the class I-like SAM-binding methyltransferase superfamily. Protein arginine N-methyltransferase family. As to quaternary structure, homodimer. Interacts with NR1H4. Interacts with SNRPC. Interacts with the C-terminus of NCOA2/GRIP1, NCO3/ACTR and NCOA1/SRC1. Part of a complex consisting of CARM1, EP300/P300 and NCOA2/GRIP1. Interacts with FLII, TP53, myogenic factor MEF2, EP300/P300, TRIM24, CREBBP and CTNNB1. Interacts with RELA. Identified in a complex containing CARM1, TRIM24 and NCOA2/GRIP1. Interacts with NCOA3/SRC3. Interacts with SKP2. Interacts (via PH domain-like fold) with C9orf72. Interacts with PARP1; promoting PARP1 recruimtent to replication forks. Auto-methylated on Arg-551. Methylation enhances transcription coactivator activity. Methylation is required for its role in the regulation of pre-mRNA alternative splicing. In terms of processing, phosphorylation at Ser-217 interferes with S-adenosyl-L-methionine binding and strongly reduces methyltransferase activity. Phosphorylation at Ser-217 is strongly increased during mitosis, and decreases rapidly to a very low, basal level after entry into the G1 phase of the cell cycle. Phosphorylation at Ser-217 may promote location in the cytosol. Post-translationally, ubiquitinated by E3 ubiquitin-protein ligase complex containing FBXO9 at Lys-228; leading to proteasomal degradation. In terms of tissue distribution, isoform 1 is expressed at low levels in brain, liver and testis. Isoform 2 is highly expressed in brain, liver, skeletal muscle and testis. As to expression, isoform 3 is highly expressed in spleen, liver and kidney. In terms of tissue distribution, isoform 4 is expressed in spleen, liver and kidney.

Its subcellular location is the nucleus. The protein resides in the cytoplasm. It is found in the chromosome. The enzyme catalyses L-arginyl-[protein] + 2 S-adenosyl-L-methionine = N(omega),N(omega)-dimethyl-L-arginyl-[protein] + 2 S-adenosyl-L-homocysteine + 2 H(+). With respect to regulation, methylation of H3R17 (H3R17me) by CARM1 is stimulated by preacetylation of H3 'Lys-18' (H3K18ac) H3 'Lys-23' (H3K23ac) by EP300 and blocked by citrullination of H3 'Arg-17' (H3R17ci) by PADI4. Its function is as follows. Methylates (mono- and asymmetric dimethylation) the guanidino nitrogens of arginyl residues in several proteins involved in DNA packaging, transcription regulation, pre-mRNA splicing, and mRNA stability. Recruited to promoters upon gene activation together with histone acetyltransferases from EP300/P300 and p160 families, methylates histone H3 at 'Arg-17' (H3R17me), forming mainly asymmetric dimethylarginine (H3R17me2a), leading to activation of transcription via chromatin remodeling. During nuclear hormone receptor activation and TCF7L2/TCF4 activation, acts synergically with EP300/P300 and either one of the p160 histone acetyltransferases NCOA1/SRC1, NCOA2/GRIP1 and NCOA3/ACTR or CTNNB1/beta-catenin to activate transcription. During myogenic transcriptional activation, acts together with NCOA3/ACTR as a coactivator for MEF2C. During monocyte inflammatory stimulation, acts together with EP300/P300 as a coactivator for NF-kappa-B. Acts as a coactivator for PPARG, promotes adipocyte differentiation and the accumulation of brown fat tissue. Plays a role in the regulation of pre-mRNA alternative splicing by methylation of splicing factors. Also seems to be involved in p53/TP53 transcriptional activation. Methylates EP300/P300, both at 'Arg-2142', which may loosen its interaction with NCOA2/GRIP1, and at 'Arg-580' and 'Arg-604' in the KIX domain, which impairs its interaction with CREB and inhibits CREB-dependent transcriptional activation. Also methylates arginine residues in RNA-binding proteins PABPC1, ELAVL1 and ELAV4, which may affect their mRNA-stabilizing properties and the half-life of their target mRNAs. Acts as a transcriptional coactivator of ACACA/acetyl-CoA carboxylase by enriching H3R17 methylation at its promoter, thereby positively regulating fatty acid synthesis. Independently of its methyltransferase activity, involved in replication fork progression: promotes PARP1 recruitment to replication forks, leading to poly-ADP-ribosylation of chromatin at replication forks and reduced fork speed. Isoform 3 specifically affects pre-mRNA splicing. This activity is independent from methyltransferase activity. The protein is Histone-arginine methyltransferase CARM1 (Carm1) of Rattus norvegicus (Rat).